A 198-amino-acid chain; its full sequence is MMVSTARAVVCLSLCLCVCQVRGSHIPARMNKTIQNLLQHYNISNKDRFNGKPVFPKEPLSGRMETKMLFMGGVLETYEKLIGQMLEQLPNTTPPTAGSREGLNSAAPEVSVRTDLNYILKKVQELRTNRFKEQSKLLQGLHDLGDIKMNNFIIQSKALWELQWMYEEASSLSNNTKMQRRRRRRRRQARKVKTPTRA.

An N-terminal signal peptide occupies residues 1-23 (MMVSTARAVVCLSLCLCVCQVRG). N-linked (GlcNAc...) asparagine glycans are attached at residues Asn-31, Asn-42, and Asn-174. The interval 173–198 (SNNTKMQRRRRRRRRQARKVKTPTRA) is disordered. Basic residues predominate over residues 178 to 198 (MQRRRRRRRRQARKVKTPTRA).

This sequence belongs to the type II (or gamma) interferon family. In terms of assembly, homodimer.

It localises to the secreted. Cytokine which binds to interferon gamma receptor 1 (ifngr1). Also binds with lower affinity to interferon gamma receptor 1-like (ifngr1l). Has activating effects on macrophages and neutrophils. This is Interferon gamma from Paralichthys olivaceus (Bastard halibut).